The primary structure comprises 173 residues: NADH-quinone oxidoreductase subunit B (173 aa).

[4Fe-4S] cluster is bound by residues Cys52, Cys53, Cys117, and Cys147.

It belongs to the complex I 20 kDa subunit family. As to quaternary structure, NDH-1 is composed of 14 different subunits. Subunits NuoB, C, D, E, F, and G constitute the peripheral sector of the complex. The cofactor is [4Fe-4S] cluster.

The protein resides in the cell inner membrane. It catalyses the reaction a quinone + NADH + 5 H(+)(in) = a quinol + NAD(+) + 4 H(+)(out). Its function is as follows. NDH-1 shuttles electrons from NADH, via FMN and iron-sulfur (Fe-S) centers, to quinones in the respiratory chain. Couples the redox reaction to proton translocation (for every two electrons transferred, four hydrogen ions are translocated across the cytoplasmic membrane), and thus conserves the redox energy in a proton gradient. The sequence is that of NADH-quinone oxidoreductase subunit B from Pelagibacter ubique (strain HTCC1062).